Here is a 566-residue protein sequence, read N- to C-terminus: Putative ABC transporter ATP-binding protein BCE_2668 (566 aa).

2 ABC transporter domains span residues 5–246 (ISFE…GLRE) and 300–533 (LKVE…ANLK). ATP-binding positions include 39-46 (GRSGSGKS) and 333-340 (GHNGAGKS).

Belongs to the ABC transporter superfamily.

Its subcellular location is the cell membrane. Functionally, probably part of an ABC transporter complex. Responsible for energy coupling to the transport system. This chain is Putative ABC transporter ATP-binding protein BCE_2668, found in Bacillus cereus (strain ATCC 10987 / NRS 248).